A 373-amino-acid polypeptide reads, in one-letter code: Probable pectin lyase C (373 aa).

The signal sequence occupies residues 1–18 (MKVPFLQLLCLNAALASA). Intrachain disulfides connect Cys-81-Cys-100 and Cys-90-Cys-220. N-linked (GlcNAc...) asparagine glycosylation is present at Asn-123. Arg-250 is a catalytic residue. A disulfide bond links Cys-316 and Cys-324.

It belongs to the polysaccharide lyase 1 family.

Its subcellular location is the secreted. It carries out the reaction Eliminative cleavage of (1-&gt;4)-alpha-D-galacturonan methyl ester to give oligosaccharides with 4-deoxy-6-O-methyl-alpha-D-galact-4-enuronosyl groups at their non-reducing ends.. Its function is as follows. Pectinolytic enzymes consist of four classes of enzymes: pectin lyase, polygalacturonase, pectin methylesterase and rhamnogalacturonase. Among pectinolytic enzymes, pectin lyase is the most important in depolymerization of pectin, since it cleaves internal glycosidic bonds of highly methylated pectins. In Aspergillus niger (strain ATCC MYA-4892 / CBS 513.88 / FGSC A1513), this protein is Probable pectin lyase C (pelC).